We begin with the raw amino-acid sequence, 806 residues long: MASGADSKGDDLSTAILKQKNRPNRLIVDEAINEDNSVVSLSQPKMDELQLFRGDTVLLKGKKRREAVCIVLSDDTCSDEKIRMNRVVRNNLRVHLGDVISIQPCPDVKYGKRIHVLPIDDTVEGITGNLFEVYLKPYFLEAYRPIRKGDIFLVRGGMRAVEFKVVETDPSPYCIVAPDTVIHCEGEPIKREDEEESLNEVGYDDIGGCRKQLAQIKEMVELPLRHPALFKAIGVKPPRGILLYGPPGTGKTLIARAVANETGAFFFLINGPEIMSKLAGESESNLRKAFEEAEKNAPAIIFIDELDAIAPKREKTHGEVERRIVSQLLTLMDGLKQRAHVIVMAATNRPNSIDPALRRFGRFDREVDIGIPDATGRLEILQIHTKNMKLADDVDLEQVANETHGHVGADLAALCSEAALQAIRKKMDLIDLEDETIDAEVMNSLAVTMDDFRWALSQSNPSALRETVVEVPQVTWEDIGGLEDVKRELQDLVQYPVEHPDKFLKFGMTPSKGVLFYGPPGCGKTLLAKAIANECQANFISIKGPELLTMWFGESEANVREIFDKARQAAPCVLFFDELDSIAKARGGNIGDGGGAADRVINQILTEMDGMSTKKNVFIIGATNRPDIIDPAILRPGRLDQLIYIPLPDEKSRVAILKANLRKSPVAKDVDLEFLAKMTNGFSGADLTEICQRACKLAIRESIESEIRRERERQTNPSAMEVEEDDPVPEIRRDHFEEAMRFARRSVSDNDIRKYEMFAQTLQQSRGFGSFRFPSGNQGGAGPSQGSGGGTGGSVYTEDNDDDLYG.

Ala-2 carries the post-translational modification N-acetylalanine. 2 positions are modified to phosphoserine: Ser-3 and Ser-7. Lys-8 is covalently cross-linked (Glycyl lysine isopeptide (Lys-Gly) (interchain with G-Cter in SUMO2)). At Ser-13 the chain carries Phosphoserine. Lys-18 participates in a covalent cross-link: Glycyl lysine isopeptide (Lys-Gly) (interchain with G-Cter in SUMO2). Ser-37 carries the phosphoserine modification. ATP is bound at residue 247–253 (PGTGKTL). Lys-315 bears the N6,N6,N6-trimethyllysine; by VCPKMT mark. Positions 348 and 384 each coordinate ATP. Position 436 is a phosphothreonine (Thr-436). Ser-462 carries the phosphoserine modification. 2 positions are modified to N6-acetyllysine: Lys-502 and Lys-505. 521–526 (GCGKTL) is a binding site for ATP. Lys-668 carries the post-translational modification N6-acetyllysine; alternate. Lys-668 is subject to N6-succinyllysine; alternate. A Phosphoserine modification is found at Ser-702. The tract at residues 708–727 (RRERERQTNPSAMEVEEDDP) is disordered. Position 754 is an N6-acetyllysine (Lys-754). Residues 768–806 (FGSFRFPSGNQGGAGPSQGSGGGTGGSVYTEDNDDDLYG) are disordered. Phosphoserine occurs at positions 770, 775, and 787. Positions 777–793 (NQGGAGPSQGSGGGTGG) are enriched in gly residues. The tract at residues 797–806 (TEDNDDDLYG) is interaction with UBXN6. At Tyr-805 the chain carries Phosphotyrosine.

The protein belongs to the AAA ATPase family. Homohexamer. Forms a ring-shaped particle of 12.5 nm diameter, that displays 6-fold radial symmetry. Part of a ternary complex containing STX5A, NSFL1C and VCP. NSFL1C forms a homotrimer that binds to one end of a VCP homohexamer. The complex binds to membranes enriched in phosphatidylethanolamine-containing lipids and promotes Golgi membrane fusion. Binds to a heterodimer of NPLOC4 and UFD1, binding to this heterodimer inhibits Golgi-membrane fusion. Interaction with VCIP135 leads to dissociation of the complex via ATP hydrolysis by VCP. Part of a ternary complex containing NPLOC4, UFD1 and VCP. Interacts with NSFL1C-like protein p37; the complex has membrane fusion activity and is required for Golgi and endoplasmic reticulum biogenesis. Interacts with SELENOS and SYVN1, as well as with DERL1 (via SHP-box motif), DERL2 and DERL3; which probably transfer misfolded proteins from the ER to VCP. Interacts with SVIP and DERL1. Component of a complex required to couple retrotranslocation, ubiquitination and deglycosylation composed of NGLY1, SAKS1, AMFR, VCP and RAD23B. Part of a complex composed of STUB1/CHIP, VCP/p97, CHRNA3, and UBXN2A that modulates the ubiquitination and endoplasmic reticulum-associated degradation (ERAD) of CHRNA3. Within the complex UBXN2A acts as a scaffold protein required for the interaction of CHRNA3 with VCP/p97, this interaction also inhibits CHRNA3 ubiquitination by STUB1/CHIP and subsequently ERAD. Interacts with UBXN2A (via UBX domain); the interaction is required for the interaction of CHRNA3 in the STUB1-VCP-UBXN2A complex. Directly interacts with UBXN4 and RNF19A. Interacts with CASR. Interacts with UBE4B and YOD1. Interacts with clathrin. Interacts with RNF103. Interacts with TRIM13 and TRIM21. Component of a VCP/p97-AMFR/gp78 complex that participates in the final step of the endoplasmic reticulum-associated degradation (ERAD) of HMGCR. Interacts directly with AMFR/gp78 (via its VIM). Interacts with RHBDD1 (via C-terminal domain). Interacts with SPRTN; leading to recruitment to stalled replication forks. Interacts with WASHC5. Interacts with UBOX5. Interacts (via N-terminus) with UBXN7, UBXN8, and probably several other UBX domain-containing proteins (via UBX domains); the interactions are mutually exclusive with VIM-dependent interactions such as those with AMFR and SELENOS. Forms a complex with UBQLN1 and UBXN4. Interacts (via the PIM motif) with RNF31 (via the PUB domain). Interacts with RIGI and RNF125; interaction takes place when RIGI is ubiquitinated via 'Lys-63'-linked ubiquitin on its CARD domains, leading to recruit RNF125 and promote ubiquitination and degradation of RIGI. Interacts with BAG6. Interacts with UBXN10. Interacts with UBXN6; the interaction with UBXN6 is direct and competitive with UFD1. Forms a ternary complex with CAV1 and UBXN6. Interacts with PLAA, UBXN6 and YOD1; may form a complex involved in macroautophagy. Interacts with ANKZF1. Interacts with ubiquitin-binding protein FAF1. Interacts with ZFAND2B (via VIM motif); the interaction is direct. Interacts with ZFAND1 (via its ubiquitin-like region); this interaction occurs in an arsenite-dependent manner. Interacts with CCDC47. Interacts with LMBR1L and UBAC2. Interacts with ATXN3. Interacts with TEX264; bridging VCP to covalent DNA-protein cross-links (DPCs). Mg(2+) is required as a cofactor. Post-translationally, ISGylated. Methylation at Lys-315 catalyzed by VCPKMT is increased in the presence of ASPSCR1. Lys-315 methylation may decrease ATPase activity. In terms of processing, phosphorylated by tyrosine kinases in response to T-cell antigen receptor activation. Phosphorylated in mitotic cells.

The protein resides in the cytoplasm. It localises to the cytosol. It is found in the endoplasmic reticulum. Its subcellular location is the nucleus. The protein localises to the stress granule. The enzyme catalyses ATP + H2O = ADP + phosphate + H(+). Functionally, necessary for the fragmentation of Golgi stacks during mitosis and for their reassembly after mitosis. Involved in the formation of the transitional endoplasmic reticulum (tER). The transfer of membranes from the endoplasmic reticulum to the Golgi apparatus occurs via 50-70 nm transition vesicles which derive from part-rough, part-smooth transitional elements of the endoplasmic reticulum (tER). Vesicle budding from the tER is an ATP-dependent process. The ternary complex containing UFD1, VCP and NPLOC4 binds ubiquitinated proteins and is necessary for the export of misfolded proteins from the ER to the cytoplasm, where they are degraded by the proteasome. The NPLOC4-UFD1-VCP complex regulates spindle disassembly at the end of mitosis and is necessary for the formation of a closed nuclear envelope. Regulates E3 ubiquitin-protein ligase activity of RNF19A. Component of the VCP/p97-AMFR/gp78 complex that participates in the final step of the sterol-mediated ubiquitination and endoplasmic reticulum-associated degradation (ERAD) of HMGCR. Mediates the endoplasmic reticulum-associated degradation of CHRNA3 in cortical neurons as part of the STUB1-VCP-UBXN2A complex. Involved in endoplasmic reticulum stress-induced pre-emptive quality control, a mechanism that selectively attenuates the translocation of newly synthesized proteins into the endoplasmic reticulum and reroutes them to the cytosol for proteasomal degradation. Involved in clearance process by mediating G3BP1 extraction from stress granules. Also involved in DNA damage response: recruited to double-strand breaks (DSBs) sites in a RNF8- and RNF168-dependent manner and promotes the recruitment of TP53BP1 at DNA damage sites. Recruited to stalled replication forks by SPRTN: may act by mediating extraction of DNA polymerase eta (POLH) to prevent excessive translesion DNA synthesis and limit the incidence of mutations induced by DNA damage. Together with SPRTN metalloprotease, involved in the repair of covalent DNA-protein cross-links (DPCs) during DNA synthesis. Involved in interstrand cross-link repair in response to replication stress by mediating unloading of the ubiquitinated CMG helicase complex. Mediates extraction of PARP1 trapped to chromatin: recognizes and binds ubiquitinated PARP1 and promotes its removal. Required for cytoplasmic retrotranslocation of stressed/damaged mitochondrial outer-membrane proteins and their subsequent proteasomal degradation. Essential for the maturation of ubiquitin-containing autophagosomes and the clearance of ubiquitinated protein by autophagy. Acts as a negative regulator of type I interferon production by interacting with RIGI: interaction takes place when RIGI is ubiquitinated via 'Lys-63'-linked ubiquitin on its CARD domains, leading to recruit RNF125 and promote ubiquitination and degradation of RIGI. May play a role in the ubiquitin-dependent sorting of membrane proteins to lysosomes where they undergo degradation. May more particularly play a role in caveolins sorting in cells. By controlling the steady-state expression of the IGF1R receptor, indirectly regulates the insulin-like growth factor receptor signaling pathway. The polypeptide is Transitional endoplasmic reticulum ATPase (VCP) (Sus scrofa (Pig)).